The sequence spans 152 residues: Ribonuclease H (152 aa).

The RNase H type-1 domain occupies 1 to 142; that stretch reads MGSKVVIYTD…ADKLAVQGRE (142 aa). Mg(2+) is bound by residues D10, E48, D70, and D134.

Belongs to the RNase H family. Monomer. Requires Mg(2+) as cofactor.

Its subcellular location is the cytoplasm. It catalyses the reaction Endonucleolytic cleavage to 5'-phosphomonoester.. In terms of biological role, endonuclease that specifically degrades the RNA of RNA-DNA hybrids. The polypeptide is Ribonuclease H (Rickettsia massiliae (strain Mtu5)).